Here is a 470-residue protein sequence, read N- to C-terminus: MSEPHFKVIIVGGSITGLTLAHSLHKIGVDFTILEKRATVTPQEGASVGILPNGARVLDQLGLYGLVEEATAPLGATHIHFPDGFHFCSLYPKSMLDNFGYPVAFLERRRLLEVLYNALPDKSKVLVNKTVSDIEQCEDGKSAGVKVRTADGDVYEGDIVVGADGVHSRTRSELWRMSSSAGQSEDVRMEKARMSAEYSCVFGISRGPSGLKAGEQIMRMYDGRTLVVIPSKDDVVFWFLSRKLGKKYKYSEAPRFTLEDAAAECAELADAPLGNDVRFGDVWKIRQTFNMVVLEENLLRTWSFGRVLCIGDSIHKMTVNLGQGANCAIEDVAILTNLLSQCLGSKREAKPSGQELDALLRRFNDVHLSRVSHIYDTSWLIARVHARDGFVRKIIGRYVMPYFGHKFESRPFNMIANAAALEFLPLPRSSFPGWEKYKSKEDKSGSWAVVSRSVLLLVGLAILSTWWRRA.

An N-terminal signal peptide occupies residues 1–24; that stretch reads MSEPHFKVIIVGGSITGLTLAHSL. FAD is bound by residues Glu-35, Gly-49, and Arg-108. Asn-128 is a glycosylation site (N-linked (GlcNAc...) asparagine). Residue Arg-193 is part of the active site. Residues Asp-312 and Ala-325 each contribute to the FAD site. The chain crosses the membrane as a helical span at residues 447 to 463; the sequence is WAVVSRSVLLLVGLAIL.

Belongs to the paxM FAD-dependent monooxygenase family. FAD is required as a cofactor.

It is found in the membrane. The protein operates within secondary metabolite biosynthesis; terpenoid biosynthesis. FAD-dependent monooxygenase; part of the gene cluster that mediates the biosynthesis of the diterpenoid pyrones higginsianins A and B. The first step of the pathway is the synthesis of the alpha-pyrone moiety by the polyketide synthase dpchA via condensation of one acetyl-CoA starter unit with 3 malonyl-CoA units and 2 methylations. The alpha-pyrone is then combined with geranylgeranyl pyrophosphate (GGPP) formed by the GGPP synthase dpchD through the action of the prenyltransferase dpchC to yield a linear alpha-pyrone diterpenoid. Subsequent steps in the diterpenoid pyrone biosynthetic pathway involve the decalin core formation, which is initiated by the epoxidation of the C10-C11 olefin by the FAD-dependent oxidoreductase dpchE, and is followed by a cyclization cascade catalyzed by the terpene cyclase dpchB. The short chain dehydrogenase/reductase dpchG then oxidizes the 8S hydroxy group to a ketone and the short chain dehydrogenase/reductase dpchH reduces the ketone to the 8R hydroxy group to yield higginsianin B. Finally, the FAD-dependent oxidoreductase dpchF converts higginsianin B into higginsianin A. The sequence is that of FAD-dependent monooxygenase dpchE from Colletotrichum higginsianum (strain IMI 349063) (Crucifer anthracnose fungus).